The primary structure comprises 283 residues: Tetrahydroxynaphthalene reductase (283 aa).

Positions 1-21 (MPAVTQPRGESKYDAIPGPLG) are disordered. An NADP(+)-binding site is contributed by 39–63 (RGIGREMAMELGRRGCKVIVNYANS). Residue Ser164 coordinates substrate. The active-site Proton acceptor is the Tyr178.

It belongs to the short-chain dehydrogenases/reductases (SDR) family. As to quaternary structure, homotetramer.

It catalyses the reaction scytalone + NADP(+) = naphthalene-1,3,6,8-tetrol + NADPH + H(+). The protein operates within pigment biosynthesis; melanin biosynthesis. Its function is as follows. Catalyzes the NADPH-dependent reduction of 1,3,6,8-tetrahydroxynaphthalene (T4HN) into (+)-scytalone and 1,3,8-trihydroxynaphthalene into (-)-vermelone. This enzyme is the biochemical target of several commercially important fungicides which are used to prevent blast disease in rice plants. The polypeptide is Tetrahydroxynaphthalene reductase (Pyricularia oryzae (strain 70-15 / ATCC MYA-4617 / FGSC 8958) (Rice blast fungus)).